Consider the following 358-residue polypeptide: NADH-quinone oxidoreductase subunit H (358 aa).

A run of 8 helical transmembrane segments spans residues 20–40 (ITVG…IPLI), 95–115 (ALFY…WAVI), 128–148 (IGLL…IIAG), 168–188 (ISYE…SGSM), 206–226 (VFSW…ISAV), 253–273 (GFAF…IAAL), 295–315 (TPSA…YLWI), and 334–354 (VLIP…ISPL).

This sequence belongs to the complex I subunit 1 family. In terms of assembly, NDH-1 is composed of 14 different subunits. Subunits NuoA, H, J, K, L, M, N constitute the membrane sector of the complex.

It localises to the cell inner membrane. The catalysed reaction is a quinone + NADH + 5 H(+)(in) = a quinol + NAD(+) + 4 H(+)(out). In terms of biological role, NDH-1 shuttles electrons from NADH, via FMN and iron-sulfur (Fe-S) centers, to quinones in the respiratory chain. The immediate electron acceptor for the enzyme in this species is believed to be ubiquinone. Couples the redox reaction to proton translocation (for every two electrons transferred, four hydrogen ions are translocated across the cytoplasmic membrane), and thus conserves the redox energy in a proton gradient. This subunit may bind ubiquinone. The polypeptide is NADH-quinone oxidoreductase subunit H (Neisseria gonorrhoeae (strain ATCC 700825 / FA 1090)).